An 85-amino-acid polypeptide reads, in one-letter code: Translation initiation factor IF-1 (85 aa).

The S1-like domain maps to 1 to 72 (MAKEELIEMH…SKGRITFRHI (72 aa)).

The protein belongs to the IF-1 family. As to quaternary structure, component of the 30S ribosomal translation pre-initiation complex which assembles on the 30S ribosome in the order IF-2 and IF-3, IF-1 and N-formylmethionyl-tRNA(fMet); mRNA recruitment can occur at any time during PIC assembly.

Its subcellular location is the cytoplasm. In terms of biological role, one of the essential components for the initiation of protein synthesis. Stabilizes the binding of IF-2 and IF-3 on the 30S subunit to which N-formylmethionyl-tRNA(fMet) subsequently binds. Helps modulate mRNA selection, yielding the 30S pre-initiation complex (PIC). Upon addition of the 50S ribosomal subunit IF-1, IF-2 and IF-3 are released leaving the mature 70S translation initiation complex. In Polaromonas naphthalenivorans (strain CJ2), this protein is Translation initiation factor IF-1.